The primary structure comprises 243 residues: Tyrosine recombinase XerD-like (243 aa).

Positions 1-72 (MKEYIRPFLN…AVNQFLYFLY (72 aa)) constitute a Core-binding (CB) domain. One can recognise a Tyr recombinase domain in the interval 85–243 (LPKVSVSKEQ…KTMITLEKYR (159 aa)). Residues Lys-149 and Arg-210 contribute to the active site. Residue Tyr-242 is the O-(3'-phospho-DNA)-tyrosine intermediate of the active site.

This sequence belongs to the 'phage' integrase family. XerD-like subfamily.

Its subcellular location is the cytoplasm. In terms of biological role, putative tyrosine recombinase. Not involved in the cutting and rejoining of the recombining DNA molecules on dif(SL) site. This Streptococcus sanguinis (strain SK36) protein is Tyrosine recombinase XerD-like.